The chain runs to 86 residues: Small ribosomal subunit protein uS17 (86 aa).

The protein belongs to the universal ribosomal protein uS17 family. Part of the 30S ribosomal subunit.

Its function is as follows. One of the primary rRNA binding proteins, it binds specifically to the 5'-end of 16S ribosomal RNA. This Methylococcus capsulatus (strain ATCC 33009 / NCIMB 11132 / Bath) protein is Small ribosomal subunit protein uS17.